The following is a 120-amino-acid chain: UPF0344 protein lin2366 (120 aa).

4 helical membrane passes run Gly3 to Ile23, Met33 to Val53, Ile62 to Leu82, and Gly92 to Leu112.

It belongs to the UPF0344 family.

Its subcellular location is the cell membrane. The protein is UPF0344 protein lin2366 of Listeria innocua serovar 6a (strain ATCC BAA-680 / CLIP 11262).